A 335-amino-acid polypeptide reads, in one-letter code: Nucleoid-associated protein PSEEN4449 (335 aa).

Belongs to the YejK family.

It localises to the cytoplasm. The protein resides in the nucleoid. The chain is Nucleoid-associated protein PSEEN4449 from Pseudomonas entomophila (strain L48).